Here is a 219-residue protein sequence, read N- to C-terminus: 7-cyano-7-deazaguanine synthase (219 aa).

10 to 20 (FSGGQDSTTCL) provides a ligand contact to ATP. 4 residues coordinate Zn(2+): C188, C196, C199, and C202.

The protein belongs to the QueC family. Zn(2+) serves as cofactor.

The catalysed reaction is 7-carboxy-7-deazaguanine + NH4(+) + ATP = 7-cyano-7-deazaguanine + ADP + phosphate + H2O + H(+). The protein operates within purine metabolism; 7-cyano-7-deazaguanine biosynthesis. Its function is as follows. Catalyzes the ATP-dependent conversion of 7-carboxy-7-deazaguanine (CDG) to 7-cyano-7-deazaguanine (preQ(0)). This Neisseria meningitidis serogroup C / serotype 2a (strain ATCC 700532 / DSM 15464 / FAM18) protein is 7-cyano-7-deazaguanine synthase.